The following is a 421-amino-acid chain: Serine--tRNA ligase (421 aa).

Residue 227–229 (TSE) coordinates L-serine. ATP contacts are provided by residues 257–259 (RRE) and V273. E280 serves as a coordination point for L-serine. 344–347 (ELTS) contributes to the ATP binding site. T379 lines the L-serine pocket.

It belongs to the class-II aminoacyl-tRNA synthetase family. Type-1 seryl-tRNA synthetase subfamily. Homodimer. The tRNA molecule binds across the dimer.

The protein localises to the cytoplasm. The enzyme catalyses tRNA(Ser) + L-serine + ATP = L-seryl-tRNA(Ser) + AMP + diphosphate + H(+). The catalysed reaction is tRNA(Sec) + L-serine + ATP = L-seryl-tRNA(Sec) + AMP + diphosphate + H(+). It functions in the pathway aminoacyl-tRNA biosynthesis; selenocysteinyl-tRNA(Sec) biosynthesis; L-seryl-tRNA(Sec) from L-serine and tRNA(Sec): step 1/1. Catalyzes the attachment of serine to tRNA(Ser). Is also able to aminoacylate tRNA(Sec) with serine, to form the misacylated tRNA L-seryl-tRNA(Sec), which will be further converted into selenocysteinyl-tRNA(Sec). In Leifsonia xyli subsp. xyli (strain CTCB07), this protein is Serine--tRNA ligase.